We begin with the raw amino-acid sequence, 361 residues long: MHAFPHGTTATPTAIAVPPSLRLPVIEAAFPRQLHPYWPKLQETTRTWLLEKRLMPADKVEEYADGLCYTDLMAGYYLGAPDEVLQAIADYSAWFFVWDDRHDRDIVHGRAGAWRRLRGLLHTALDSPGDHLHHEDTLVAGFADSVRRLYAFLPATWNARFARHFHTVIEAYDREFHNRTRGIVPGVEEYLELRRLTFAHWIWTDLLEPSSGCELPDAVRKHPAYRRAALLSQEFAAWYNDLCSLPKEIAGDEVHNLGISLITHHSLTLEEAIGEVRRRVEECITEFLAVERDALRFADELADGTVRGKELSGAVRANVGNMRNWFSSVYWFHHESGRYMVDSWDDRSTPPYVNNEAAGEK.

Asp-99, Asp-103, Asn-240, Ser-244, and Glu-248 together coordinate Mg(2+). Positions 99-103 (DDRHD) match the DDXXD motif motif.

It belongs to the terpene synthase family. Requires Mg(2+) as cofactor. Mn(2+) serves as cofactor. It depends on Fe(3+) as a cofactor.

The enzyme catalyses (2E,6E)-farnesyl diphosphate = (+)-epi-isozizaene + diphosphate. Its pathway is sesquiterpene biosynthesis; epi-isozizaene biosynthesis. In terms of biological role, catalyzes the cyclization of farnesyl diphosphate (FPP) to the sesquiterpene epi-isozizaene. The chain is Epi-isozizaene synthase (cyc1) from Streptomyces coelicolor (strain ATCC BAA-471 / A3(2) / M145).